A 291-amino-acid polypeptide reads, in one-letter code: Formamidopyrimidine-DNA glycosylase (291 aa).

P2 serves as the catalytic Schiff-base intermediate with DNA. E3 serves as the catalytic Proton donor. The Proton donor; for beta-elimination activity role is filled by K60. Residues H108 and R127 each coordinate DNA. The segment at 257–291 adopts an FPG-type zinc-finger fold; sequence WVYRRGGQACRICSTPIRRESLCGRGTHWCPNCQR. Residue R281 is the Proton donor; for delta-elimination activity of the active site.

This sequence belongs to the FPG family. In terms of assembly, monomer. Requires Zn(2+) as cofactor.

It carries out the reaction Hydrolysis of DNA containing ring-opened 7-methylguanine residues, releasing 2,6-diamino-4-hydroxy-5-(N-methyl)formamidopyrimidine.. The enzyme catalyses 2'-deoxyribonucleotide-(2'-deoxyribose 5'-phosphate)-2'-deoxyribonucleotide-DNA = a 3'-end 2'-deoxyribonucleotide-(2,3-dehydro-2,3-deoxyribose 5'-phosphate)-DNA + a 5'-end 5'-phospho-2'-deoxyribonucleoside-DNA + H(+). Its function is as follows. Involved in base excision repair of DNA damaged by oxidation or by mutagenic agents. Acts as a DNA glycosylase that recognizes and removes damaged bases. Has a preference for oxidized purines, such as 7,8-dihydro-8-oxoguanine (8-oxoG). Has AP (apurinic/apyrimidinic) lyase activity and introduces nicks in the DNA strand. Cleaves the DNA backbone by beta-delta elimination to generate a single-strand break at the site of the removed base with both 3'- and 5'-phosphates. The protein is Formamidopyrimidine-DNA glycosylase of Prochlorococcus marinus (strain MIT 9313).